The primary structure comprises 334 residues: tRNA-dihydrouridine(20/20a) synthase (334 aa).

FMN-binding positions include 17–19 (PMM) and glutamine 70. The active-site Proton donor is cysteine 100. FMN-binding positions include lysine 139, histidine 171, 211 to 213 (NGG), and 233 to 234 (GR).

This sequence belongs to the Dus family. DusA subfamily. The cofactor is FMN.

The enzyme catalyses 5,6-dihydrouridine(20) in tRNA + NADP(+) = uridine(20) in tRNA + NADPH + H(+). It catalyses the reaction 5,6-dihydrouridine(20) in tRNA + NAD(+) = uridine(20) in tRNA + NADH + H(+). It carries out the reaction 5,6-dihydrouridine(20a) in tRNA + NADP(+) = uridine(20a) in tRNA + NADPH + H(+). The catalysed reaction is 5,6-dihydrouridine(20a) in tRNA + NAD(+) = uridine(20a) in tRNA + NADH + H(+). In terms of biological role, catalyzes the synthesis of 5,6-dihydrouridine (D), a modified base found in the D-loop of most tRNAs, via the reduction of the C5-C6 double bond in target uridines. Specifically modifies U20 and U20a in tRNAs. The sequence is that of tRNA-dihydrouridine(20/20a) synthase (dus2) from Synechocystis sp. (strain ATCC 27184 / PCC 6803 / Kazusa).